The primary structure comprises 346 residues: Glycosyltransferase 1 domain-containing protein 1 (346 aa).

Positions 1 to 16 are cleaved as a signal peptide; it reads MRLLFLAVLRPHTGNA.

The protein belongs to the glycosyltransferase group 1 family. Glycosyltransferase 4 subfamily.

Its subcellular location is the secreted. This is Glycosyltransferase 1 domain-containing protein 1 (GLT1D1) from Pongo abelii (Sumatran orangutan).